A 228-amino-acid chain; its full sequence is MTSVLIVEDEESLADPLAFLLRKEGFEATVVGDGPSALAEFERSGADIVLLDLMLPGMSGTDVCKQLRARSSVPVIMVTARDSEIDKVVGLELGADDYVTKPYSARELIARIRAVLRRGADNDDAGADDGVLEAGPVRMDVERHVVSVNGEPITLPLKEFDLLEYLMRNSGRVLTRGQLIDRVWGADYVGDTKTLDVHVKRLRSKIEEDPANPVHLVTVRGLGYKLEG.

Residues 3-116 enclose the Response regulatory domain; the sequence is SVLIVEDEES…ELIARIRAVL (114 aa). 4-aspartylphosphate is present on aspartate 52. The segment at residues 129-228 is a DNA-binding region (ompR/PhoB-type); it reads DGVLEAGPVR…VRGLGYKLEG (100 aa).

Phosphorylated by SenX3.

Member of the two-component regulatory system SenX3/RegX3 involved in stress response. The system is involved in phosphate starvation response. Once phosphorylated by SenX3, activates the expression of the alkaline phosphatase phoA, the high-affinity phosphate transporter pstSCAB, phnDCE, phnF and senX3. May act as a negative regulator of NhaA. Acts by binding to a DNA motif consisting of an inverted repeat. In Mycolicibacterium smegmatis (strain ATCC 700084 / mc(2)155) (Mycobacterium smegmatis), this protein is Sensory transduction protein RegX3.